A 314-amino-acid chain; its full sequence is Mitochondrial 2-oxoglutarate/malate carrier protein (314 aa).

Alanine 2 is modified (N-acetylalanine). Serine 6 carries the phosphoserine modification. 3 Solcar repeats span residues 23–108 (VKFL…LFER), 117–208 (PGFL…SKQF), and 217–306 (DNIL…MNKA). The helical transmembrane segment at 24–42 (KFLFGGLAGMGATVFVQPL) threads the bilayer. At lysine 57 the chain carries N6-succinyllysine. A helical transmembrane segment spans residues 83–101 (GLSAGLLRQATYTTTRLGI). Tyrosine 102 carries the post-translational modification Phosphotyrosine. 3 helical membrane-spanning segments follow: residues 119–140 (FLLKAVIGMTAGATGAFVGTPA), 183–202 (GCIPTMARAVVVNAAQLASY), and 222–240 (HFCASMISGLVTTAASMPV). Lysine 256 carries the N6-acetyllysine modification. Residues 281-300 (GFTPYYARLGPHTVLTFIFL) traverse the membrane as a helical segment.

The protein belongs to the mitochondrial carrier (TC 2.A.29) family. Interacts with SMIM26. In terms of processing, the N-terminus is blocked. In terms of tissue distribution, heart, liver and brain.

It is found in the mitochondrion inner membrane. The catalysed reaction is (S)-malate(in) + 2-oxoglutarate(out) = (S)-malate(out) + 2-oxoglutarate(in). It carries out the reaction malonate(in) + 2-oxoglutarate(out) = malonate(out) + 2-oxoglutarate(in). It catalyses the reaction succinate(in) + 2-oxoglutarate(out) = succinate(out) + 2-oxoglutarate(in). The enzyme catalyses maleate(in) + 2-oxoglutarate(out) = maleate(out) + 2-oxoglutarate(in). The catalysed reaction is oxaloacetate(in) + 2-oxoglutarate(out) = oxaloacetate(out) + 2-oxoglutarate(in). Functionally, catalyzes the transport of 2-oxoglutarate (alpha-oxoglutarate) across the inner mitochondrial membrane in an electroneutral exchange for malate. Can also exchange 2-oxoglutarate for other dicarboxylic acids such as malonate, succinate, maleate and oxaloacetate, although with lower affinity. Contributes to several metabolic processes, including the malate-aspartate shuttle, the oxoglutarate/isocitrate shuttle, in gluconeogenesis from lactate, and in nitrogen metabolism. Maintains mitochondrial fusion and fission events, and the organization and morphology of cristae. Involved in the regulation of apoptosis. Helps protect from cytotoxic-induced apoptosis by modulating glutathione levels in mitochondria. The polypeptide is Mitochondrial 2-oxoglutarate/malate carrier protein (SLC25A11) (Bos taurus (Bovine)).